A 145-amino-acid chain; its full sequence is Putative nickel-responsive regulator (145 aa).

4 residues coordinate Ni(2+): H77, H88, H90, and C96.

It belongs to the transcriptional regulatory CopG/NikR family. Ni(2+) is required as a cofactor.

Transcriptional regulator. The sequence is that of Putative nickel-responsive regulator from Rhizobium rhizogenes (strain K84 / ATCC BAA-868) (Agrobacterium radiobacter).